Here is a 261-residue protein sequence, read N- to C-terminus: Calcium-binding protein 8 (261 aa).

The interval 1-39 is disordered; sequence MRLPEQPGEGKPENEKKGDGGALGGGEEPPRSQAPDFPT. The Cytoplasmic portion of the chain corresponds to 1–234; sequence MRLPEQPGEG…QNRQTCVRKS (234 aa). The span at 8–19 shows a compositional bias: basic and acidic residues; it reads GEGKPENEKKGD. EF-hand domains lie at 78–113 and 114–149; these read EELD…LGYM and PSEV…KLVS. 9 residues coordinate Ca(2+): Asp-91, Asp-93, Asn-95, Glu-102, Asp-127, Asp-129, Asp-131, Gln-133, and Glu-138. The chain crosses the membrane as a helical; Anchor for type IV membrane protein span at residues 235–255; that stretch reads LICAFAMAFIISVMLIAANQI. Residues 256-261 lie on the Extracellular side of the membrane; that stretch reads LRSGME.

In terms of assembly, interacts with PI4KB. This binding competes with FREQ/NCS1 binding in a calcium-dependent manner. As to expression, brain specific.

It localises to the golgi apparatus. The protein resides in the trans-Golgi network membrane. It is found in the cytoplasm. Its subcellular location is the perinuclear region. The protein localises to the cell membrane. In terms of biological role, negatively regulates Golgi-to-plasma membrane trafficking by interacting with PI4KB and inhibiting its activity. May play a role in the physiology of neurons and is potentially important in memory and learning. The polypeptide is Calcium-binding protein 8 (CALN1) (Homo sapiens (Human)).